We begin with the raw amino-acid sequence, 128 residues long: UPF0325 protein KPN78578_01770 (128 aa).

It belongs to the UPF0325 family.

This chain is UPF0325 protein KPN78578_01770, found in Klebsiella pneumoniae subsp. pneumoniae (strain ATCC 700721 / MGH 78578).